Consider the following 505-residue polypeptide: ATP synthase subunit alpha (505 aa).

ATP is bound at residue Gly170–Thr177.

The protein belongs to the ATPase alpha/beta chains family. In terms of assembly, F-type ATPases have 2 components, CF(1) - the catalytic core - and CF(0) - the membrane proton channel. CF(1) has five subunits: alpha(3), beta(3), gamma(1), delta(1), epsilon(1). CF(0) has four main subunits: a, b, b' and c.

Its subcellular location is the cellular thylakoid membrane. The catalysed reaction is ATP + H2O + 4 H(+)(in) = ADP + phosphate + 5 H(+)(out). Functionally, produces ATP from ADP in the presence of a proton gradient across the membrane. The alpha chain is a regulatory subunit. The polypeptide is ATP synthase subunit alpha (Cyanothece sp. (strain PCC 7425 / ATCC 29141)).